Consider the following 187-residue polypeptide: GTP cyclohydrolase 1 (187 aa).

Zn(2+) contacts are provided by C76, H79, and C148.

The protein belongs to the GTP cyclohydrolase I family. In terms of assembly, homomer.

The catalysed reaction is GTP + H2O = 7,8-dihydroneopterin 3'-triphosphate + formate + H(+). Its pathway is cofactor biosynthesis; 7,8-dihydroneopterin triphosphate biosynthesis; 7,8-dihydroneopterin triphosphate from GTP: step 1/1. The sequence is that of GTP cyclohydrolase 1 from Desulforamulus reducens (strain ATCC BAA-1160 / DSM 100696 / MI-1) (Desulfotomaculum reducens).